The sequence spans 904 residues: Alpha-actinin-4 (904 aa).

The disordered stretch occupies residues 1 to 27 (MVDYHSAGQPYPYGGNGPGPNGDYMAQ). An actin-binding region spans residues 1–259 (MVDYHSAGQP…IMTYVSSFYH (259 aa)). 2 Calponin-homology (CH) domains span residues 43 to 147 (KQQR…LRFA) and 156 to 262 (TSAK…HAFS). Spectrin repeat units lie at residues 286-396 (HLME…WLLN), 406-511 (HLAE…ALEK), 521-632 (ELHL…ALQD), and 642-745 (RLRR…EVEN). 2 consecutive EF-hand domains span residues 758-793 (EQMQ…LGYD) and 799-834 (QGDA…ETTD). Ca(2+)-binding residues include Asp-771, Asp-773, Glu-782, Asp-812, Asn-814, Ser-816, and Ser-818.

It belongs to the alpha-actinin family. In terms of assembly, homodimer; antiparallel. Component of the CART complex. May interact with nuclear receptors.

It is found in the nucleus. Its subcellular location is the cytoplasm. The protein localises to the cell junction. The protein resides in the perinuclear region. Its function is as follows. F-actin cross-linking protein which is thought to anchor actin to a variety of intracellular structures. This is a bundling protein. Probably involved in vesicular trafficking via its association with the CART complex. Involved in tight junction assembly in epithelial cells. May also function as a transcriptional coactivator, stimulating transcription mediated by nuclear hormone receptors. This chain is Alpha-actinin-4, found in Gallus gallus (Chicken).